A 455-amino-acid polypeptide reads, in one-letter code: tRNA modification GTPase MnmE (455 aa).

(6S)-5-formyl-5,6,7,8-tetrahydrofolate contacts are provided by Arg24, Glu81, and Lys120. One can recognise a TrmE-type G domain in the interval 216-378; the sequence is GMTVVIAGRP…LREHLKACMG (163 aa). Asn226 is a binding site for K(+). GTP-binding positions include 226–231, 245–251, 270–273, and 335–338; these read NAGKSS, TDIAGTT, DTAG, and NKAD. Ser230 serves as a coordination point for Mg(2+). Thr245, Ile247, and Thr250 together coordinate K(+). Position 251 (Thr251) interacts with Mg(2+). Position 455 (Lys455) interacts with (6S)-5-formyl-5,6,7,8-tetrahydrofolate.

Belongs to the TRAFAC class TrmE-Era-EngA-EngB-Septin-like GTPase superfamily. TrmE GTPase family. Homodimer. Heterotetramer of two MnmE and two MnmG subunits. It depends on K(+) as a cofactor.

The protein localises to the cytoplasm. In terms of biological role, exhibits a very high intrinsic GTPase hydrolysis rate. Involved in the addition of a carboxymethylaminomethyl (cmnm) group at the wobble position (U34) of certain tRNAs, forming tRNA-cmnm(5)s(2)U34. The protein is tRNA modification GTPase MnmE of Ectopseudomonas mendocina (strain ymp) (Pseudomonas mendocina).